A 414-amino-acid polypeptide reads, in one-letter code: Imidazolonepropionase (414 aa).

Residues H73 and H75 each contribute to the Fe(3+) site. The Zn(2+) site is built by H73 and H75. Residues R82, Y145, and H178 each coordinate 4-imidazolone-5-propanoate. Y145 serves as a coordination point for N-formimidoyl-L-glutamate. A Fe(3+)-binding site is contributed by H249. Residue H249 participates in Zn(2+) binding. Position 252 (Q252) interacts with 4-imidazolone-5-propanoate. A Fe(3+)-binding site is contributed by D324. Residue D324 coordinates Zn(2+). Positions 326 and 328 each coordinate N-formimidoyl-L-glutamate. S329 contributes to the 4-imidazolone-5-propanoate binding site.

It belongs to the metallo-dependent hydrolases superfamily. HutI family. Requires Zn(2+) as cofactor. Fe(3+) serves as cofactor.

The protein resides in the cytoplasm. The enzyme catalyses 4-imidazolone-5-propanoate + H2O = N-formimidoyl-L-glutamate. The protein operates within amino-acid degradation; L-histidine degradation into L-glutamate; N-formimidoyl-L-glutamate from L-histidine: step 3/3. Functionally, catalyzes the hydrolytic cleavage of the carbon-nitrogen bond in imidazolone-5-propanoate to yield N-formimidoyl-L-glutamate. It is the third step in the universal histidine degradation pathway. The chain is Imidazolonepropionase from Shewanella pealeana (strain ATCC 700345 / ANG-SQ1).